A 584-amino-acid chain; its full sequence is Protein phosphatase 2A scaffold subunit (584 aa).

14 HEAT repeats span residues 7–45 (ESDD…ALGP), 46–84 (ERTR…FVGG), 86–123 (EHAV…EIPT), 168–206 (LRKT…VKSE), 207–239 (ILPL…MLTN), 240–278 (EENI…SMGT), 279–317 (EITK…LLTK), 318–356 (EMNI…IYGK), 358–395 (DTLT…VIGI), 397–434 (MLSQ…QLGV), 441–479 (LGNL…AKNN), 480–512 (IIPK…VVGG), 513–551 (DVIS…LLDS), and 553–584 (IVQS…LQLC).

Belongs to the phosphatase 2A regulatory subunit A family. In terms of assembly, component of the Sca1 complex composed of at least gefA, gefH, scaA, phr, and the protein phosphatase 2A subunits pppA and pho2B.

The protein localises to the cytoplasm. It localises to the cytosol. It is found in the cell membrane. In terms of biological role, scaffolding molecule which may coordinate the assembly of the catalytic subunit and a variable regulatory B subunit. Component of the Sca1 complex, a regulator of cell motility, chemotaxis and signal relay. The Sca1 complex is recruited to the plasma membrane in a chemoattractant- and F-actin-dependent manner and is enriched at the leading edge of chemotaxing cells where it regulates F-actin dynamics and signal relay by controlling the activation of rasC and the downstream target of rapamycin complex 2 (TORC2)-Akt/protein kinase B (PKB) pathway. The polypeptide is Protein phosphatase 2A scaffold subunit (pppA) (Dictyostelium discoideum (Social amoeba)).